The primary structure comprises 517 residues: T-complex protein 11-like protein 2 (517 aa).

The interval 1–59 is disordered; it reads MPFNGEKQYVNEDQQSDSESSRFSESTASLSDYGCSRQSFTSDSSSKSSSPASTSPPRG. Ser-16 is subject to Phosphoserine. The span at 17 to 55 shows a compositional bias: low complexity; it reads DSESSRFSESTASLSDYGCSRQSFTSDSSSKSSSPASTS.

Belongs to the TCP11 family. As to quaternary structure, interacts with FMNL2; this interaction promotes muscle-derived satellite cell (MDSC) migration and differentiation.

It is found in the cytoplasm. The protein localises to the cytoskeleton. In terms of biological role, promotes the migration of muscle-derived satellite cells (MDSCs) during differentiation throught interaction with FMNL2 and therefore may participate in microfilament assembly. The chain is T-complex protein 11-like protein 2 from Rattus norvegicus (Rat).